We begin with the raw amino-acid sequence, 244 residues long: Probable transcriptional regulatory protein CHAB381_1426 (244 aa).

The protein belongs to the TACO1 family.

It is found in the cytoplasm. This is Probable transcriptional regulatory protein CHAB381_1426 from Campylobacter hominis (strain ATCC BAA-381 / DSM 21671 / CCUG 45161 / LMG 19568 / NCTC 13146 / CH001A).